The sequence spans 160 residues: SsrA-binding protein (160 aa).

The segment at 131–160 is disordered; the sequence is KKEYDKRHTERERDSDRELQRAVRTKGKED.

The protein belongs to the SmpB family.

It localises to the cytoplasm. Functionally, required for rescue of stalled ribosomes mediated by trans-translation. Binds to transfer-messenger RNA (tmRNA), required for stable association of tmRNA with ribosomes. tmRNA and SmpB together mimic tRNA shape, replacing the anticodon stem-loop with SmpB. tmRNA is encoded by the ssrA gene; the 2 termini fold to resemble tRNA(Ala) and it encodes a 'tag peptide', a short internal open reading frame. During trans-translation Ala-aminoacylated tmRNA acts like a tRNA, entering the A-site of stalled ribosomes, displacing the stalled mRNA. The ribosome then switches to translate the ORF on the tmRNA; the nascent peptide is terminated with the 'tag peptide' encoded by the tmRNA and targeted for degradation. The ribosome is freed to recommence translation, which seems to be the essential function of trans-translation. The sequence is that of SsrA-binding protein from Pseudomonas fluorescens (strain ATCC BAA-477 / NRRL B-23932 / Pf-5).